The following is a 239-amino-acid chain: Purine nucleoside phosphorylase DeoD-type 1 (239 aa).

An a purine D-ribonucleoside-binding site is contributed by histidine 5. Residues glycine 21, arginine 25, arginine 44, and 88–91 (RVGS) contribute to the phosphate site. A purine D-ribonucleoside is bound by residues 180 to 182 (EME) and 204 to 205 (SD). Residue aspartate 205 is the Proton donor of the active site.

It belongs to the PNP/UDP phosphorylase family. As to quaternary structure, homohexamer; trimer of homodimers.

It carries out the reaction a purine D-ribonucleoside + phosphate = a purine nucleobase + alpha-D-ribose 1-phosphate. The catalysed reaction is a purine 2'-deoxy-D-ribonucleoside + phosphate = a purine nucleobase + 2-deoxy-alpha-D-ribose 1-phosphate. Catalyzes the reversible phosphorolytic breakdown of the N-glycosidic bond in the beta-(deoxy)ribonucleoside molecules, with the formation of the corresponding free purine bases and pentose-1-phosphate. This chain is Purine nucleoside phosphorylase DeoD-type 1, found in Vibrio vulnificus (strain CMCP6).